A 419-amino-acid chain; its full sequence is Tryptophan synthase beta chain (419 aa).

Lysine 113 is modified (N6-(pyridoxal phosphate)lysine).

This sequence belongs to the TrpB family. Tetramer of two alpha and two beta chains. The cofactor is pyridoxal 5'-phosphate.

It carries out the reaction (1S,2R)-1-C-(indol-3-yl)glycerol 3-phosphate + L-serine = D-glyceraldehyde 3-phosphate + L-tryptophan + H2O. The protein operates within amino-acid biosynthesis; L-tryptophan biosynthesis; L-tryptophan from chorismate: step 5/5. In terms of biological role, the beta subunit is responsible for the synthesis of L-tryptophan from indole and L-serine. The polypeptide is Tryptophan synthase beta chain (Picrophilus torridus (strain ATCC 700027 / DSM 9790 / JCM 10055 / NBRC 100828 / KAW 2/3)).